A 945-amino-acid chain; its full sequence is Isoleucine--tRNA ligase (945 aa).

The 'HIGH' region motif lies at 66–76 (PYANGDIHLGH). Residue Glu-581 coordinates L-isoleucyl-5'-AMP. Positions 622-626 (KMSKS) match the 'KMSKS' region motif. Lys-625 provides a ligand contact to ATP. Residues Cys-908, Cys-911, Cys-928, and Cys-931 each coordinate Zn(2+).

It belongs to the class-I aminoacyl-tRNA synthetase family. IleS type 1 subfamily. Monomer. Zn(2+) serves as cofactor.

The protein localises to the cytoplasm. The enzyme catalyses tRNA(Ile) + L-isoleucine + ATP = L-isoleucyl-tRNA(Ile) + AMP + diphosphate. Functionally, catalyzes the attachment of isoleucine to tRNA(Ile). As IleRS can inadvertently accommodate and process structurally similar amino acids such as valine, to avoid such errors it has two additional distinct tRNA(Ile)-dependent editing activities. One activity is designated as 'pretransfer' editing and involves the hydrolysis of activated Val-AMP. The other activity is designated 'posttransfer' editing and involves deacylation of mischarged Val-tRNA(Ile). The chain is Isoleucine--tRNA ligase from Paraburkholderia phytofirmans (strain DSM 17436 / LMG 22146 / PsJN) (Burkholderia phytofirmans).